The sequence spans 231 residues: Eukaryotic translation initiation factor 4E-1 (231 aa).

EIF4G-binding regions lie at residues 56 to 59 and 66 to 102; these read HPLE and FDNS…NNIH. Residues 74 to 79, lysine 106, and 124 to 125 each bind mRNA; these read RQTAWG and WE. Cysteines 129 and 167 form a disulfide. The EIF4G-binding stretch occupies residues 150 to 159; that stretch reads YTLLAMIGHQ. Residues 174–179 and 219–223 each bind mRNA; these read RAKGEK and KRLDR.

It belongs to the eukaryotic initiation factor 4E family. In terms of assembly, EIF4F is a multi-subunit complex, the composition of which varies with external and internal environmental conditions. It is composed of at least EIF4A, EIF4E and EIF4G. EIF4E is also known to interact with other partners. In higher plants two isoforms of EIF4F have been identified, named isoform EIF4F and isoform EIF(iso)4F. Isoform EIF4F has subunits p220 and p26, whereas isoform EIF(iso)4F has subunits p82 and p28. As to quaternary structure, (Microbial infection) Interacts with potyvirus viral genome-linked protein (VPg); this interaction is possible in susceptible hosts but impaired in resistant plants. Post-translationally, according to the redox status, the Cys-129-Cys-167 disulfide bridge may have a role in regulating protein function by affecting its ability to bind capped mRNA.

The protein resides in the nucleus. The protein localises to the cytoplasm. Component of the protein complex eIF4F, which is involved in the recognition of the mRNA cap, ATP-dependent unwinding of 5'-terminal secondary structure and recruitment of mRNA to the ribosome. Recognizes and binds the 7-methylguanosine-containing mRNA cap during an early step in the initiation of protein synthesis and facilitates ribosome binding by inducing the unwinding of the mRNAs secondary structures. Key component of recessive resistance to potyviruses. In terms of biological role, (Microbial infection) Susceptibility host factor required for viral infection (e.g. pepper mottle virus (PepMoV), potato virus Y (PVY) and tobacco etch virus (TEV)) by recruiting viral RNAs to the host ribosomal complex via an interaction with viral genome-linked protein (VPg). The chain is Eukaryotic translation initiation factor 4E-1 from Solanum habrochaites (Wild tomato).